Reading from the N-terminus, the 454-residue chain is Bifunctional protein GlmU (454 aa).

The interval 1–232 is pyrophosphorylase; that stretch reads MTDRTCLSIV…VDNVIGINNR (232 aa). Residues 11–14, Lys-25, Gln-78, and 83–84 each bind UDP-N-acetyl-alpha-D-glucosamine; these read LAAG and GT. Residue Asp-108 coordinates Mg(2+). UDP-N-acetyl-alpha-D-glucosamine-binding residues include Gly-144, Glu-158, Asn-173, and Asn-230. Asn-230 contributes to the Mg(2+) binding site. The tract at residues 233–253 is linker; it reads AELAEAETIWQNRKRRELMLS. An N-acetyltransferase region spans residues 254–454; the sequence is GVTLIAPETV…AIKAAKSVSK (201 aa). UDP-N-acetyl-alpha-D-glucosamine-binding residues include Arg-319 and Lys-337. His-349 (proton acceptor) is an active-site residue. Positions 352 and 363 each coordinate UDP-N-acetyl-alpha-D-glucosamine. Residues Ala-366, 372–373, Ser-391, Ser-409, and Arg-426 contribute to the acetyl-CoA site; that span reads NY.

The protein in the N-terminal section; belongs to the N-acetylglucosamine-1-phosphate uridyltransferase family. This sequence in the C-terminal section; belongs to the transferase hexapeptide repeat family. In terms of assembly, homotrimer. It depends on Mg(2+) as a cofactor.

The protein localises to the cytoplasm. It carries out the reaction alpha-D-glucosamine 1-phosphate + acetyl-CoA = N-acetyl-alpha-D-glucosamine 1-phosphate + CoA + H(+). It catalyses the reaction N-acetyl-alpha-D-glucosamine 1-phosphate + UTP + H(+) = UDP-N-acetyl-alpha-D-glucosamine + diphosphate. The protein operates within nucleotide-sugar biosynthesis; UDP-N-acetyl-alpha-D-glucosamine biosynthesis; N-acetyl-alpha-D-glucosamine 1-phosphate from alpha-D-glucosamine 6-phosphate (route II): step 2/2. It participates in nucleotide-sugar biosynthesis; UDP-N-acetyl-alpha-D-glucosamine biosynthesis; UDP-N-acetyl-alpha-D-glucosamine from N-acetyl-alpha-D-glucosamine 1-phosphate: step 1/1. It functions in the pathway bacterial outer membrane biogenesis; LPS lipid A biosynthesis. Catalyzes the last two sequential reactions in the de novo biosynthetic pathway for UDP-N-acetylglucosamine (UDP-GlcNAc). The C-terminal domain catalyzes the transfer of acetyl group from acetyl coenzyme A to glucosamine-1-phosphate (GlcN-1-P) to produce N-acetylglucosamine-1-phosphate (GlcNAc-1-P), which is converted into UDP-GlcNAc by the transfer of uridine 5-monophosphate (from uridine 5-triphosphate), a reaction catalyzed by the N-terminal domain. This Brucella canis (strain ATCC 23365 / NCTC 10854 / RM-666) protein is Bifunctional protein GlmU.